Here is a 287-residue protein sequence, read N- to C-terminus: uncharacterized protein (287 aa).

The ATP-grasp domain maps to 115 to 287; the sequence is PQNFDREWNP…NLAIELLKAI (173 aa). ATP is bound by residues K145 and 178-188; that span reads QKYITCSKGES. Residues D248, E261, and N263 each coordinate Mg(2+). Positions 248, 261, and 263 each coordinate Mn(2+).

It belongs to the RimK family.

This is an uncharacterized protein from Mycoplasma genitalium (strain ATCC 33530 / DSM 19775 / NCTC 10195 / G37) (Mycoplasmoides genitalium).